The chain runs to 311 residues: MSNSIVIQTNSTVIEDMKQQYKHSLSPKTPQGGIFMAKVPSCTITAYKSGKVMFQGGRAEAEAARWQTGSQTPKTAVKKAVDSHRYTPPASIGTMSIVGSDEVGTGDFFGPMTVVAVYVDAKQIPLLKELGVKDSKNLNDEQITAIAKQLLHVVPYSSLVLHNEKYNELFDKGNNQGKLKALLHNKAITNLLAKLAPTKPEGVLIDQFTQPDTYYKYLAKQKQVQRENVYFATKGESVHLAVAAASILARYSFVKQFNELSKKAGMPLPKGAGKQVDIAAAKLIQKLGKERLPEFVKLHFANTEKAFRLLK.

One can recognise an RNase H type-2 domain in the interval 95-311; sequence MSIVGSDEVG…NTEKAFRLLK (217 aa). Residues D101, E102, and D206 each coordinate a divalent metal cation.

It belongs to the RNase HII family. RnhC subfamily. Mn(2+) is required as a cofactor. Requires Mg(2+) as cofactor.

The protein localises to the cytoplasm. The catalysed reaction is Endonucleolytic cleavage to 5'-phosphomonoester.. Its function is as follows. Endonuclease that specifically degrades the RNA of RNA-DNA hybrids. The sequence is that of Ribonuclease HIII from Bacillus cereus (strain ZK / E33L).